We begin with the raw amino-acid sequence, 281 residues long: Diaminopimelate epimerase (281 aa).

Positions 11 and 65 each coordinate substrate. Residue Cys-74 is the Proton donor of the active site. Residues 75 to 76 (GN), Asn-164, Asn-197, and 215 to 216 (ER) each bind substrate. Cys-224 serves as the catalytic Proton acceptor. 225–226 (GT) contributes to the substrate binding site.

The protein belongs to the diaminopimelate epimerase family. As to quaternary structure, homodimer.

The protein localises to the cytoplasm. It carries out the reaction (2S,6S)-2,6-diaminopimelate = meso-2,6-diaminopimelate. It participates in amino-acid biosynthesis; L-lysine biosynthesis via DAP pathway; DL-2,6-diaminopimelate from LL-2,6-diaminopimelate: step 1/1. Its function is as follows. Catalyzes the stereoinversion of LL-2,6-diaminopimelate (L,L-DAP) to meso-diaminopimelate (meso-DAP), a precursor of L-lysine and an essential component of the bacterial peptidoglycan. In Heliobacterium modesticaldum (strain ATCC 51547 / Ice1), this protein is Diaminopimelate epimerase.